A 507-amino-acid polypeptide reads, in one-letter code: UDP-N-acetylhexosamine pyrophosphorylase-like protein 1 (507 aa).

Residues 56–91 (ACARPHGPPPDLAARLRPLPPERVGRASRSDPETRR) are disordered. Positions 78-91 (RVGRASRSDPETRR) are enriched in basic and acidic residues. The Substrate binding motif lies at 111-114 (LAGG). UTP is bound by residues 111–114 (LAGG), Lys125, Gln199, and Gly225. Residue Asn226 participates in substrate binding. Asp256 lines the UTP pocket. The Substrate binding signature appears at 306–307 (EY). Lys380 contributes to the UTP binding site. Residue Lys410 coordinates substrate.

The protein belongs to the UDPGP type 1 family.

This is UDP-N-acetylhexosamine pyrophosphorylase-like protein 1 (UAP1L1) from Homo sapiens (Human).